The chain runs to 212 residues: Penicillin-binding protein activator LpoB (212 aa).

The signal sequence occupies residues 1 to 19 (MTKMHRYAAIAALAIFLSG). Residue Cys-20 is the site of N-palmitoyl cysteine attachment. Cys-20 carries the S-diacylglycerol cysteine lipid modification. The tract at residues 28–73 (PVEEVKPAPEQPAQPPQPPVVPSVPTIPQQPGPIEHEDQTGQPAPK) is disordered. The span at 36-49 (PEQPAQPPQPPVVP) shows a compositional bias: pro residues.

Belongs to the LpoB family. In terms of assembly, interacts with PBP1b.

It localises to the cell outer membrane. Regulator of peptidoglycan synthesis that is essential for the function of penicillin-binding protein 1B (PBP1b). The polypeptide is Penicillin-binding protein activator LpoB (Salmonella typhimurium (strain LT2 / SGSC1412 / ATCC 700720)).